The primary structure comprises 139 residues: Small ribosomal subunit protein uS11 (139 aa).

A compositionally biased stretch (low complexity) spans 1-13 (MAKQAAKGSAAAT). The segment at 1-30 (MAKQAAKGSAAATKRQRGKRREKKNVPRGQ) is disordered. Residues 14–23 (KRQRGKRREK) are compositionally biased toward basic residues.

It belongs to the universal ribosomal protein uS11 family. As to quaternary structure, part of the 30S ribosomal subunit. Interacts with proteins S7 and S18. Binds to IF-3.

Located on the platform of the 30S subunit, it bridges several disparate RNA helices of the 16S rRNA. Forms part of the Shine-Dalgarno cleft in the 70S ribosome. In Roseiflexus sp. (strain RS-1), this protein is Small ribosomal subunit protein uS11.